The following is an 82-amino-acid chain: Defensin-like protein 7 (82 aa).

The signal sequence occupies residues 1 to 29 (MKSSTTSMQLIPTLFFLTILLASPEMVEG). At Gln30 the chain carries Pyrrolidone carboxylic acid. 4 disulfides stabilise this stretch: Cys33–Cys77, Cys44–Cys64, Cys50–Cys71, and Cys54–Cys73.

This sequence belongs to the DEFL family. In terms of tissue distribution, expressed in stems, roots, rosette leaves and flower buds.

The protein localises to the secreted. The polypeptide is Defensin-like protein 7 (LCR75) (Arabidopsis thaliana (Mouse-ear cress)).